The following is a 290-amino-acid chain: Acetyl-coenzyme A carboxylase carboxyl transferase subunit beta (290 aa).

The CoA carboxyltransferase N-terminal domain occupies 30–290 (IMTKCPKCKK…HAGQEVNKDA (261 aa)). Cysteine 34, cysteine 37, cysteine 53, and cysteine 56 together coordinate Zn(2+). A C4-type zinc finger spans residues 34–56 (CPKCKKIMYTKELSENLNVCFNC).

It belongs to the AccD/PCCB family. As to quaternary structure, acetyl-CoA carboxylase is a heterohexamer composed of biotin carboxyl carrier protein (AccB), biotin carboxylase (AccC) and two subunits each of ACCase subunit alpha (AccA) and ACCase subunit beta (AccD). Zn(2+) serves as cofactor.

It localises to the cytoplasm. It carries out the reaction N(6)-carboxybiotinyl-L-lysyl-[protein] + acetyl-CoA = N(6)-biotinyl-L-lysyl-[protein] + malonyl-CoA. The protein operates within lipid metabolism; malonyl-CoA biosynthesis; malonyl-CoA from acetyl-CoA: step 1/1. In terms of biological role, component of the acetyl coenzyme A carboxylase (ACC) complex. Biotin carboxylase (BC) catalyzes the carboxylation of biotin on its carrier protein (BCCP) and then the CO(2) group is transferred by the transcarboxylase to acetyl-CoA to form malonyl-CoA. This is Acetyl-coenzyme A carboxylase carboxyl transferase subunit beta from Staphylococcus carnosus (strain TM300).